A 423-amino-acid chain; its full sequence is Divalent metal cation transporter MntH (423 aa).

Helical transmembrane passes span 31-51 (LMML…GNFA), 58-78 (SSFG…AMLI), 116-136 (IIAI…FQLV), 137-157 (FGIS…MILI), 168-188 (VVIG…LFFA), 213-233 (AAGI…SALF), 254-274 (IAMV…AAVF), 302-322 (VLFG…GTMA), 342-362 (FITM…TDIL), 363-383 (VMSQ…LLIF), and 401-421 (YAGV…MVTL).

The protein belongs to the NRAMP family.

The protein localises to the cell inner membrane. Its function is as follows. H(+)-stimulated, divalent metal cation uptake system. In Vibrio campbellii (strain ATCC BAA-1116), this protein is Divalent metal cation transporter MntH.